Here is a 444-residue protein sequence, read N- to C-terminus: uncharacterized protein (444 aa).

14 helical membrane-spanning segments follow: residues 9-29 (LIVS…MIAV), 42-62 (IASI…TQPI), 82-102 (LFLI…LIVF), 104-126 (ALQA…HVVS), 136-156 (FFGL…SILI), 164-184 (IFWV…TMFP), 193-213 (APLD…IILL), 217-237 (EAPW…PLFF), 263-283 (LSVL…PLFM), 295-315 (GMAL…GAQL), 324-344 (IIFL…LLSS), 347-367 (SVLF…VGLT), 387-407 (GIFS…IGLI), and 411-431 (HTLF…SLGI).

Belongs to the major facilitator superfamily. TCR/Tet family.

It localises to the cell membrane. This is an uncharacterized protein from Bacillus subtilis (strain 168).